We begin with the raw amino-acid sequence, 504 residues long: ATP synthase subunit alpha 2 (504 aa).

169-176 (GDRQTGKT) lines the ATP pocket.

It belongs to the ATPase alpha/beta chains family. As to quaternary structure, F-type ATPases have 2 components, CF(1) - the catalytic core - and CF(0) - the membrane proton channel. CF(1) has five subunits: alpha(3), beta(3), gamma(1), delta(1), epsilon(1). CF(0) has three main subunits: a(1), b(2) and c(9-12). The alpha and beta chains form an alternating ring which encloses part of the gamma chain. CF(1) is attached to CF(0) by a central stalk formed by the gamma and epsilon chains, while a peripheral stalk is formed by the delta and b chains.

Its subcellular location is the cell membrane. The catalysed reaction is ATP + H2O + 4 H(+)(in) = ADP + phosphate + 5 H(+)(out). In terms of biological role, produces ATP from ADP in the presence of a proton gradient across the membrane. The alpha chain is a regulatory subunit. This chain is ATP synthase subunit alpha 2, found in Listeria innocua serovar 6a (strain ATCC BAA-680 / CLIP 11262).